The chain runs to 187 residues: RNA pyrophosphohydrolase (187 aa).

Residues 6–149 form the Nudix hydrolase domain; sequence GYRANVGIIL…KRQVYRLALT (144 aa). The short motif at 38 to 59 is the Nudix box element; that stretch reads GGIKSGETPTQAMYRELAEETG.

Belongs to the Nudix hydrolase family. RppH subfamily. The cofactor is a divalent metal cation.

Its function is as follows. Accelerates the degradation of transcripts by removing pyrophosphate from the 5'-end of triphosphorylated RNA, leading to a more labile monophosphorylated state that can stimulate subsequent ribonuclease cleavage. The protein is RNA pyrophosphohydrolase of Nitrosomonas eutropha (strain DSM 101675 / C91 / Nm57).